The chain runs to 340 residues: uncharacterized protein (340 aa).

Residues 58–307 (AALPFRYTVN…PSYREMLRER (250 aa)) enclose the Radical SAM core domain. Residues cysteine 72, cysteine 76, and cysteine 79 each coordinate [4Fe-4S] cluster. 2 consecutive transmembrane segments (helical) span residues 140–160 (YALMPGIIGALAASGTPLSIL) and 243–263 (QLLGQIAAAGATGVTVFGLHL).

It depends on [4Fe-4S] cluster as a cofactor.

Its subcellular location is the cell membrane. This is an uncharacterized protein from Mycobacterium tuberculosis (strain CDC 1551 / Oshkosh).